Reading from the N-terminus, the 134-residue chain is Methylmalonyl-CoA decarboxylase subunit gamma (134 aa).

Positions 28 to 38 are enriched in low complexity; that stretch reads APAARPAAAPA. A disordered region spans residues 28-67; the sequence is APAARPAAAPAPAAPKPAAAPAPAPAPKTTAAGAGAGANT. The segment covering 39 to 53 has biased composition (pro residues); that stretch reads PAAPKPAAAPAPAPA. Residues 54–67 show a composition bias toward low complexity; it reads PKTTAAGAGAGANT. Positions 58–134 constitute a Biotinyl-binding domain; it reads AAGAGAGANT…NAGDILVVLS (77 aa). Lys100 is modified (N6-biotinyllysine).

In terms of assembly, the methylmalonyl-CoA decarboxylase is composed of four subunits: the carboxyltransferase alpha subunit (MmdA), the tunnel beta subunit (MmdB), the biotin-containing gamma subunit (MmdC) and the delta subunit (MmdD). Biotin is required as a cofactor.

It is found in the cell membrane. It catalyses the reaction (S)-methylmalonyl-CoA + Na(+)(in) + H(+)(out) = propanoyl-CoA + Na(+)(out) + CO2. Biotin-containing subunit of the sodium ion pump methylmalonyl-CoA decarboxylase, which converts the chemical energy of a decarboxylation reaction into an electrochemical gradient of Na(+) ions across the cytoplasmic membrane, thereby creating a sodium ion motive force that is used for ATP synthesis. This Propionigenium modestum protein is Methylmalonyl-CoA decarboxylase subunit gamma.